A 417-amino-acid chain; its full sequence is Phosphoglycerate kinase 1 (417 aa).

S2 carries the post-translational modification N-acetylserine. Phosphoserine is present on residues S2 and S4. Position 6 is an N6-succinyllysine (K6). K11 carries the N6-acetyllysine modification. The (2R)-3-phosphoglycerate site is built by V23, D24, F25, N26, Q38, and R39. The segment at 38-43 (QRIKAA) is mitochondrial targeting region exposed following cis-trans isomerization by PIN1 and recognized by the TOM complex for mitochondrial translocation of the protein. An N6-acetyllysine; alternate modification is found at K48. The residue at position 48 (K48) is an N6-succinyllysine; alternate. Residues S62, H63, G65, and R66 each coordinate (2R)-3-phosphoglycerate. Residue K75 is modified to N6-acetyllysine. Position 76 is a phosphotyrosine (Y76). N6-acetyllysine occurs at positions 86 and 91. K97 is subject to N6-acetyllysine; alternate. The residue at position 97 (K97) is an N6-(2-hydroxyisobutyryl)lysine; alternate. Residues L122 and R123 each coordinate (2R)-3-phosphoglycerate. K131 is subject to N6-acetyllysine; alternate. Residue K131 is modified to N6-malonyllysine; alternate. An N6-acetyllysine modification is found at K146. 2 residues coordinate (2R)-3-phosphoglycerate: H170 and R171. K191 carries the N6-succinyllysine modification. Phosphotyrosine is present on Y196. N6-acetyllysine is present on K199. S203 carries the post-translational modification Phosphoserine; by MAPK1. Residue G214 coordinates ADP. G214 provides a ligand contact to CDP. AMP is bound by residues A215 and K216. A215 provides a ligand contact to ATP. Residue A215 participates in Mg(2+) binding. K216 is subject to N6-(2-hydroxyisobutyryl)lysine. Mg(2+) is bound by residues A218 and D219. D219 provides a ligand contact to CDP. K220 contributes to the AMP binding site. An ATP-binding site is contributed by K220. K220 bears the N6-(2-hydroxyisobutyryl)lysine mark. G238 lines the ADP pocket. G238 contacts CDP. G239 is a binding site for AMP. G239 contacts ATP. Residues K267 and K291 each carry the N6-acetyllysine modification. G313 lines the AMP pocket. G313 provides a ligand contact to ATP. At K323 the chain carries N6-(2-hydroxyisobutyryl)lysine. Residues G338, V340, and F343 each contribute to the CDP site. F343 lines the ADP pocket. Residue E344 coordinates AMP. E344 is an ATP binding site. N6-acetyllysine is present on K361. Residues D375 and T376 each contribute to the ATP site. D375 is a binding site for Mg(2+).

It belongs to the phosphoglycerate kinase family. As to quaternary structure, monomer. Interacts with kinase MAPK1/ERK2; the interaction is direct, occurs under hypoxic conditions, and promotes its interaction with PIN1. Interacts with peptidyl-prolyl cis-trans isomerase PIN1; the interaction is direct, occurs under hypoxic conditions, and targets the protein to the mitochondrion by promoting interactions with the TOM complex. Interacts with mitochondrial circRNA mcPGK1 (via its 2nd stem-loop); the interaction is direct and targets the protein to the mitochondrion by promoting interactions with the TOM complex. Interacts with pyruvate dehydrogenase kinase PDK1; the interaction is direct, occurs under hypoxic conditions and leads to PDK1-mediated inhibition of pyruvate dehydrogenase complex activity. It depends on Mg(2+) as a cofactor. Phosphorylated at Ser-203 by MAPK1/ERK2 under hypoxic conditions, which promotes its mitochondrial targeting. In terms of tissue distribution, mainly expressed in spermatogonia. Localized on the principle piece in the sperm (at protein level). Expression significantly decreased in the testis of elderly men.

The protein localises to the cytoplasm. It is found in the cytosol. Its subcellular location is the mitochondrion matrix. The enzyme catalyses (2R)-3-phosphoglycerate + ATP = (2R)-3-phospho-glyceroyl phosphate + ADP. It carries out the reaction L-seryl-[protein] + ATP = O-phospho-L-seryl-[protein] + ADP + H(+). It functions in the pathway carbohydrate degradation; glycolysis; pyruvate from D-glyceraldehyde 3-phosphate: step 2/5. Its activity is regulated as follows. Specifically inhibited by heterocyclic compound CBR-470-0. Functionally, catalyzes one of the two ATP producing reactions in the glycolytic pathway via the reversible conversion of 1,3-diphosphoglycerate to 3-phosphoglycerate. Both L- and D- forms of purine and pyrimidine nucleotides can be used as substrates, but the activity is much lower on pyrimidines. In addition to its role as a glycolytic enzyme, it seems that PGK1 acts as a polymerase alpha cofactor protein (primer recognition protein). Acts as a protein kinase when localized to the mitochondrion where it phosphorylates pyruvate dehydrogenase kinase PDK1 to inhibit pyruvate dehydrogenase complex activity and suppress the formation of acetyl-coenzyme A from pyruvate, and consequently inhibit oxidative phosphorylation and promote glycolysis. May play a role in sperm motility. This chain is Phosphoglycerate kinase 1 (PGK1), found in Homo sapiens (Human).